A 212-amino-acid polypeptide reads, in one-letter code: Putative 3-methyladenine DNA glycosylase (212 aa).

It belongs to the DNA glycosylase MPG family.

The sequence is that of Putative 3-methyladenine DNA glycosylase from Nocardia farcinica (strain IFM 10152).